A 461-amino-acid polypeptide reads, in one-letter code: MTDTRKQRAAVILAAGKGTRMKSPLPKVMHAVGGRPMMDWSIALARQVGAERIVAVVHPSQDVLIAHLGKHHPDVAIAYQDPPQGTGHAVRCAEEALRGFEGDLAVLYGDSPLVPAATIEDLFGTLSDKTGLGVLGFEAEDPGLYGRLITGEDGSLEAIVEAREATPFQLRVRLCNSGVMAGRAADMFRLLAKVTNSNAKGEYYLTDLVGLARAEGIRCAVAVSGEDDLIGCDSKADLAEAEAIFQQKRRRALMEAGVTMVAPETVFLSHDTQIGADAVIEPNVVFGPGVKVAGGAQIRAFSHLEGAVVGEGCSVGPYARLRPGTVLAANVHIGNFVETKNTAMGEGAKANHLAYLGDGTIGAGANIGAGTIFCNYDGFLKHQTDVGEGAFVGSNSALVAPVRIGDGAYIGSGSVITKDVPDDALAVGRGQQITREGWARNYRAKKAAEKAARTTDQNKKG.

The segment at 1 to 235 is pyrophosphorylase; the sequence is MTDTRKQRAA…EDDLIGCDSK (235 aa). Residues 13–16, Lys27, Gln80, 85–86, 108–110, Gly146, Glu161, and Asn176 contribute to the UDP-N-acetyl-alpha-D-glucosamine site; these read LAAG, GT, and YGD. Asp110 provides a ligand contact to Mg(2+). The tract at residues 236 to 256 is linker; sequence ADLAEAEAIFQQKRRRALMEA. An N-acetyltransferase region spans residues 257–461; sequence GVTMVAPETV…ARTTDQNKKG (205 aa). The UDP-N-acetyl-alpha-D-glucosamine site is built by Arg322 and Lys340. The active-site Proton acceptor is His352. Tyr355 and Asn366 together coordinate UDP-N-acetyl-alpha-D-glucosamine. Acetyl-CoA contacts are provided by residues Ala369, 375 to 376, Ser394, Ser412, and Arg429; that span reads NY.

This sequence in the N-terminal section; belongs to the N-acetylglucosamine-1-phosphate uridyltransferase family. In the C-terminal section; belongs to the transferase hexapeptide repeat family. In terms of assembly, homotrimer. Requires Mg(2+) as cofactor.

It localises to the cytoplasm. The enzyme catalyses alpha-D-glucosamine 1-phosphate + acetyl-CoA = N-acetyl-alpha-D-glucosamine 1-phosphate + CoA + H(+). It catalyses the reaction N-acetyl-alpha-D-glucosamine 1-phosphate + UTP + H(+) = UDP-N-acetyl-alpha-D-glucosamine + diphosphate. Its pathway is nucleotide-sugar biosynthesis; UDP-N-acetyl-alpha-D-glucosamine biosynthesis; N-acetyl-alpha-D-glucosamine 1-phosphate from alpha-D-glucosamine 6-phosphate (route II): step 2/2. It functions in the pathway nucleotide-sugar biosynthesis; UDP-N-acetyl-alpha-D-glucosamine biosynthesis; UDP-N-acetyl-alpha-D-glucosamine from N-acetyl-alpha-D-glucosamine 1-phosphate: step 1/1. The protein operates within bacterial outer membrane biogenesis; LPS lipid A biosynthesis. Functionally, catalyzes the last two sequential reactions in the de novo biosynthetic pathway for UDP-N-acetylglucosamine (UDP-GlcNAc). The C-terminal domain catalyzes the transfer of acetyl group from acetyl coenzyme A to glucosamine-1-phosphate (GlcN-1-P) to produce N-acetylglucosamine-1-phosphate (GlcNAc-1-P), which is converted into UDP-GlcNAc by the transfer of uridine 5-monophosphate (from uridine 5-triphosphate), a reaction catalyzed by the N-terminal domain. The polypeptide is Bifunctional protein GlmU (Hyphomonas neptunium (strain ATCC 15444)).